We begin with the raw amino-acid sequence, 447 residues long: Serine/threonine-protein phosphatase 2A 55 kDa regulatory subunit B delta isoform (447 aa).

WD repeat units follow at residues 26–65 (AEADIISTVEFNCSGDLLATGDKGGRVVIFQREQENKSRP), 91–132 (EIEE…KRVE), 175–213 (AHTYHINSISVNSDHETYLSADDLRINLWHLEITDRSFN), 224–264 (ELTE…LCDR), 283–321 (EIISSISDVKFSNSGRYMMTRDYLSVKVWDLNMESRPVE), 338–379 (ENDC…DITL), and 414–447 (DFNKKILHTAWHPTDNIIAVAATNNLYIFQDKVN).

This sequence belongs to the phosphatase 2A regulatory subunit B family. In terms of assembly, PP2A consists of a common heterodimeric core enzyme, composed of a 36 kDa catalytic subunit (subunit C) and a 65 kDa constant regulatory subunit (PR65 or subunit A), that associates with a variety of regulatory subunits. Proteins that associate with the core dimer include three families of regulatory subunits B (the R2/B/PR55/B55, R3/B''/PR72/PR130/PR59 and R5/B'/B56 families), the 48 kDa variable regulatory subunit, viral proteins, and cell signaling molecules. Interacts with ensa (when phosphorylated at 'Ser-67') and arpp19 (when phosphorylated at 'Ser-67'), leading to inhibit PP2A activity.

It localises to the cytoplasm. Functionally, substrate-recognition subunit of protein phosphatase 2A (PP2A) that plays a key role in cell cycle by controlling mitosis entry and exit. The activity of PP2A complexes containing ppp2r2d (PR55-delta) fluctuate during the cell cycle: the activity is high in interphase and low in mitosis. During mitosis, activity of PP2A is inhibited via interaction with phosphorylated ensa and arpp19 inhibitors. PP2A complexes containing ppp2r2d (PR55-delta) also regulate the activity of TGF-beta/Activin/Nodal signaling by restricting receptor activity. Within the PP2A complexes, the B regulatory subunits modulate substrate selectivity and catalytic activity, and may also direct the localization of the catalytic enzyme to a particular subcellular compartment. The sequence is that of Serine/threonine-protein phosphatase 2A 55 kDa regulatory subunit B delta isoform (ppp2r2d) from Xenopus tropicalis (Western clawed frog).